A 555-amino-acid polypeptide reads, in one-letter code: Formate--tetrahydrofolate ligase (555 aa).

Residue Thr-65–Ser-72 coordinates ATP.

This sequence belongs to the formate--tetrahydrofolate ligase family.

The catalysed reaction is (6S)-5,6,7,8-tetrahydrofolate + formate + ATP = (6R)-10-formyltetrahydrofolate + ADP + phosphate. It participates in one-carbon metabolism; tetrahydrofolate interconversion. This chain is Formate--tetrahydrofolate ligase, found in Staphylococcus aureus (strain USA300).